Reading from the N-terminus, the 644-residue chain is Ribonuclease R (644 aa).

An RNB domain is found at 211 to 529 (RINYSHIPFI…LHRLLKELLF (319 aa)). The S1 motif domain occupies 573-644 (LELLEKEFLG…ITERIKEHVS (72 aa)).

It belongs to the RNR ribonuclease family. RNase R subfamily.

It is found in the cytoplasm. The enzyme catalyses Exonucleolytic cleavage in the 3'- to 5'-direction to yield nucleoside 5'-phosphates.. Functionally, 3'-5' exoribonuclease that releases 5'-nucleoside monophosphates and is involved in maturation of structured RNAs. This Helicobacter pylori (strain ATCC 700392 / 26695) (Campylobacter pylori) protein is Ribonuclease R.